We begin with the raw amino-acid sequence, 306 residues long: Ornithine carbamoyltransferase (306 aa).

Carbamoyl phosphate-binding positions include 51-54 (STRT), Q78, R102, and 129-132 (HPVQ). L-ornithine-binding positions include N157, D221, and 225–226 (SM). Residues 261 to 262 (CL) and R289 each bind carbamoyl phosphate.

The protein belongs to the aspartate/ornithine carbamoyltransferase superfamily. OTCase family.

The protein localises to the cytoplasm. It catalyses the reaction carbamoyl phosphate + L-ornithine = L-citrulline + phosphate + H(+). It participates in amino-acid biosynthesis; L-arginine biosynthesis; L-arginine from L-ornithine and carbamoyl phosphate: step 1/3. Functionally, reversibly catalyzes the transfer of the carbamoyl group from carbamoyl phosphate (CP) to the N(epsilon) atom of ornithine (ORN) to produce L-citrulline. This Campylobacter hominis (strain ATCC BAA-381 / DSM 21671 / CCUG 45161 / LMG 19568 / NCTC 13146 / CH001A) protein is Ornithine carbamoyltransferase.